Consider the following 426-residue polypeptide: Chaperone SurA (426 aa).

A signal peptide spans methionine 1–alanine 13. PpiC domains follow at residues serine 164–glutamate 265 and arginine 274–glycine 373.

It is found in the periplasm. The enzyme catalyses [protein]-peptidylproline (omega=180) = [protein]-peptidylproline (omega=0). Chaperone involved in the correct folding and assembly of outer membrane proteins. Recognizes specific patterns of aromatic residues and the orientation of their side chains, which are found more frequently in integral outer membrane proteins. May act in both early periplasmic and late outer membrane-associated steps of protein maturation. The protein is Chaperone SurA of Pseudomonas fluorescens (strain Pf0-1).